Consider the following 569-residue polypeptide: Formate hydrogenlyase subunit 5 (569 aa).

Residues 538 to 569 (MTVVDVRKKKSKVVPYKELERYSIERKNSPLK) constitute a propeptide that is removed on maturation.

Belongs to the complex I 49 kDa subunit family. FHL comprises of a formate dehydrogenase, unidentified electron carriers and a hydrogenase (isoenzyme 3). In this non-energy conserving pathway molecular hydrogen and carbodioxide from formate are released. Requires [4Fe-4S] cluster as cofactor. The cofactor is Ni(2+).

The protein is Formate hydrogenlyase subunit 5 (hycE) of Escherichia coli (strain K12).